Here is a 118-residue protein sequence, read N- to C-terminus: Large ribosomal subunit protein bL20 (118 aa).

It belongs to the bacterial ribosomal protein bL20 family.

Binds directly to 23S ribosomal RNA and is necessary for the in vitro assembly process of the 50S ribosomal subunit. It is not involved in the protein synthesizing functions of that subunit. The chain is Large ribosomal subunit protein bL20 from Francisella tularensis subsp. tularensis (strain WY96-3418).